The chain runs to 527 residues: Probable feruloyl esterase B (527 aa).

A signal peptide spans 1 to 19 (MALLRHLLPVLTVGSAVQS). 2 cysteine pairs are disulfide-bonded: C31–C76 and C65–C115. N56, N86, and N139 each carry an N-linked (GlcNAc...) asparagine glycan. 4 disulfide bridges follow: C188–C442, C257–C274, C283–C292, and C504–C526. Residue S189 is the Acyl-ester intermediate of the active site. Residues D258, D261, A263, D265, and I267 each coordinate Ca(2+). Residue N277 is glycosylated (N-linked (GlcNAc...) asparagine). Residues N312 and N356 are each glycosylated (N-linked (GlcNAc...) asparagine). Residues D401 and H441 each act as charge relay system in the active site.

It belongs to the tannase family.

The protein localises to the secreted. It carries out the reaction feruloyl-polysaccharide + H2O = ferulate + polysaccharide.. In terms of biological role, involved in degradation of plant cell walls. Hydrolyzes the feruloyl-arabinose ester bond in arabinoxylans as well as the feruloyl-galactose and feruloyl-arabinose ester bonds in pectin. The polypeptide is Probable feruloyl esterase B (faeB) (Emericella nidulans (strain FGSC A4 / ATCC 38163 / CBS 112.46 / NRRL 194 / M139) (Aspergillus nidulans)).